The primary structure comprises 155 residues: Acetylaranotin biosynthesis cluster protein L (155 aa).

The protein operates within mycotoxin biosynthesis. In terms of biological role, nonribosomal peptide synthetase; part of the gene cluster that mediates the biosynthesis of acetylaranotin, a member of the epipolythiodioxopiperazine (ETP) class of toxins characterized by a disulfide-bridged cyclic dipeptide. The first step of acetylaranotin biosynthesis is performed by the NRPS ataP which produces diketopiperazine cyclo-L-Phe-L-Phe via the condensation of 2 phenylalanines (L-Phe). The ataC domain of ataTC then catalyzes the formation of bishydroxylation of cyclo-L-Phe-L-Phe. The glutathione S-transferase domain ataG in ataIMG further catalyzes the conjugation of two glutathiones to the bishydroxylated intermediate. Next, the dipeptidase ataJ removes the Glu residues. The following step is performed by the carbon sulfur lyase domain ataI of ataIMG which may convert the bis-cysteinyl adduct to yield an epidithiol intermediate. The ataT domain from ataTC then catalyzes the oxidation of the free dithiols, followed by a cyclization step catalyzed by the cytochrome P450 ataF. AtaF probably acts as an epoxidase to promote a dual epoxidation formation at C8 and C9 along with C8' and C9', followed by the spontaneous nucleophilic attack of the amide nitrogens N10 and N10' to yield an intermediate with the pyrrolidine partial structure. The final steps of acetylaranotin biosynthesis involve the acetylation and ring rearrangement of an epitetrathiodiketopiperazine intermediate to produce acetylaranotin. AtaH probably catalyzes the acetylation of epitetrathiodiketopiperazine to produce a diacetate and ataY is responsible for the formation of the dihydrooxepin moiety that converts the diacetate intermediate to acetylaranotin via acetylapoaranotin. Both enzymes could function independently in the absence of the other. The specific function of ataL within the pathway has still to be determined. The acetylaranotin bis-thiomethyltransferase ataS located outside of acetylaranotin gene cluster is the main thiomethyltransferase responsible for converting acetylaranotin and its related intermediates to their methylated forms. In Aspergillus terreus (strain NIH 2624 / FGSC A1156), this protein is Acetylaranotin biosynthesis cluster protein L.